The following is a 492-amino-acid chain: Spore germination protein GerLA (492 aa).

Transmembrane regions (helical) follow at residues 295 to 315, 384 to 404, and 410 to 430; these read IIAV…QGLI, FLVI…VYSI, and ILLF…IILA.

The protein belongs to the GerABKA family.

It localises to the membrane. Contributes to the L-alanine germination response. This Bacillus cereus protein is Spore germination protein GerLA (gerLA).